Here is an 81-residue protein sequence, read N- to C-terminus: Prophage excisionase-like protein (81 aa).

To lambdoid phages excisionases.

The protein is Prophage excisionase-like protein (xisE) of Escherichia coli (strain K12).